The following is a 532-amino-acid chain: Putative F-box/LRR-repeat protein At3g42770 (532 aa).

The 46-residue stretch at 1-46 (MNCLPDELLVQILSFLPTKEATSTSLLSKRWRTLFTLSPNLDFDNS) folds into the F-box domain. LRR repeat units follow at residues 113–135 (VSELHLRIDYTKRCHLPSEIFTS), 279–305 (IRNVKTLHLTSSTVKVILLCCKGEIPM), and 398–420 (MNDLKKMQLTEDLLKLPKASPKL).

This Arabidopsis thaliana (Mouse-ear cress) protein is Putative F-box/LRR-repeat protein At3g42770.